A 109-amino-acid polypeptide reads, in one-letter code: Tetraspanin-31 (109 aa).

Residues 1–12 lie on the Cytoplasmic side of the membrane; that stretch reads MVCGGFACSKNA. The chain crosses the membrane as a helical span at residues 13–33; it reads LCALNVVYMLVGLLLIGVAAW. The Extracellular segment spans residues 34–44; the sequence is AKGLGLVSSIH. A helical membrane pass occupies residues 45–65; that stretch reads IIGGVIAVGVFLLLIAVAGLV. The Cytoplasmic portion of the chain corresponds to 66–72; it reads GAVNHHQ. The helical transmembrane segment at 73–93 threads the bilayer; that stretch reads VLLFFYMIILGLVFIFQFGIS. Over 94–109 the chain is Extracellular; it reads CSCLAINLSKQAGIIN. Residue Asn100 is glycosylated (N-linked (GlcNAc...) asparagine).

It belongs to the tetraspanin (TM4SF) family.

The protein resides in the membrane. The polypeptide is Tetraspanin-31 (TSPAN31) (Sus scrofa (Pig)).